A 302-amino-acid chain; its full sequence is Oxygen-dependent coproporphyrinogen-III oxidase (302 aa).

Ser94 provides a ligand contact to substrate. A divalent metal cation-binding residues include His98 and His108. The active-site Proton donor is His108. Substrate is bound at residue 110–112 (NVR). A divalent metal cation-binding residues include His147 and His177. An important for dimerization region spans residues 242–277 (YVEFNLVYDRGTLFGLQTGGRTESILMSMPPLARWE). 260–262 (GGR) lines the substrate pocket.

The protein belongs to the aerobic coproporphyrinogen-III oxidase family. As to quaternary structure, homodimer. The cofactor is a divalent metal cation.

The protein localises to the cytoplasm. It carries out the reaction coproporphyrinogen III + O2 + 2 H(+) = protoporphyrinogen IX + 2 CO2 + 2 H2O. Its pathway is porphyrin-containing compound metabolism; protoporphyrin-IX biosynthesis; protoporphyrinogen-IX from coproporphyrinogen-III (O2 route): step 1/1. In terms of biological role, involved in the heme biosynthesis. Catalyzes the aerobic oxidative decarboxylation of propionate groups of rings A and B of coproporphyrinogen-III to yield the vinyl groups in protoporphyrinogen-IX. The protein is Oxygen-dependent coproporphyrinogen-III oxidase of Aeromonas hydrophila subsp. hydrophila (strain ATCC 7966 / DSM 30187 / BCRC 13018 / CCUG 14551 / JCM 1027 / KCTC 2358 / NCIMB 9240 / NCTC 8049).